The chain runs to 300 residues: MQTDLSDSSFFNHQSVMTDEIMASLEHYPLIHNNQLKGIDATLGGGGHSYHLLRKYSDLNIIGLDQDPFARKSASKKLDEFKNRIDIRASNFADFVPKEKVSFVIADLGVNSNQIDDPKRGFSFQKDGPLDMRMNPFLDVDADKLIEALNEKDLANLIYKYGEERLSRKIARKIKLDLKENGKYSGTKELAYSIAGCFPPKQRYKKIHPATRTFQALRIAVNKEIEVLEKFLQVVPEWLLPGGIISIISFHSLEDRLVKSCFKNDQRLKNLTKKPITPSEQEIELNKRARSGKLRIAQLN.

S-adenosyl-L-methionine-binding positions include 46–48, aspartate 65, phenylalanine 92, aspartate 107, and glutamine 114; that span reads GGH.

Belongs to the methyltransferase superfamily. RsmH family.

It is found in the cytoplasm. The catalysed reaction is cytidine(1402) in 16S rRNA + S-adenosyl-L-methionine = N(4)-methylcytidine(1402) in 16S rRNA + S-adenosyl-L-homocysteine + H(+). In terms of biological role, specifically methylates the N4 position of cytidine in position 1402 (C1402) of 16S rRNA. This Prochlorococcus marinus (strain AS9601) protein is Ribosomal RNA small subunit methyltransferase H.